The following is a 145-amino-acid chain: Large ribosomal subunit protein uL16 (145 aa).

Residues 1 to 17 (MLMPKRVKHRKVQRGRM) are compositionally biased toward basic residues. A disordered region spans residues 1 to 20 (MLMPKRVKHRKVQRGRMKGV).

It belongs to the universal ribosomal protein uL16 family. Part of the 50S ribosomal subunit.

In terms of biological role, binds 23S rRNA and is also seen to make contacts with the A and possibly P site tRNAs. In Acetivibrio thermocellus (strain ATCC 27405 / DSM 1237 / JCM 9322 / NBRC 103400 / NCIMB 10682 / NRRL B-4536 / VPI 7372) (Clostridium thermocellum), this protein is Large ribosomal subunit protein uL16.